Consider the following 284-residue polypeptide: Two-pore potassium channel 4 (284 aa).

The tract at residues 1–21 (MEEENLLNENLLHPNESSPEE) is disordered. The Cytoplasmic portion of the chain corresponds to 1-31 (MEEENLLNENLLHPNESSPEETQVTTVSKSK). A helical transmembrane segment spans residues 32 to 52 (WTILVLAMILLLVYLTFGVCT). Positions 70 to 89 (DAFYFSIVTFSTVGYGDIVP) form an intramembrane region, pore-forming. Residues 93–113 (TTKILTIVLVSTGVVFLDYLL) form a helical membrane-spanning segment. Residues 114-156 (NRVVSHVLSLQENAILDRINKTRNRAIRDHIAEDGKIRLKWKL) are Cytoplasmic-facing. Residues 157 to 177 (CLAFCAVGLCVGSGALFLHVF) form a helical membrane-spanning segment. Positions 184-203 (DSVYLSVISVTTVGYGDKTF) form an intramembrane region, pore-forming. Residues 211 to 231 (FAVFWLLLSTIAMATLFLYLA) form a helical membrane-spanning segment. The Cytoplasmic segment spans residues 232 to 284 (EMRIDRTTVMKLPPSESEFIVFKLRESGRISEDDIKQIVREFENLEEVPSSGS).

Belongs to the two pore domain potassium channel (TC 1.A.1.7) family. Homodimer. Predominantly expressed in pollen.

It localises to the cell membrane. Voltage-independent, instantaneously activating, potassium-selective plasma membrane ion channel. Open rectifier. Regulated by cytoplasmic pH and extra-cellular calcium. Has some permeability for Rb(+) and NH(4)(+), but none for Na(+) or Li(+). This Arabidopsis thaliana (Mouse-ear cress) protein is Two-pore potassium channel 4 (TPK4).